Reading from the N-terminus, the 395-residue chain is MQAELQTALFQAFDTLNLQRVKTFSVPPVTLCGLGALGACGQEAQARGVSHLFVMVDSFLHQAGMTAPLARSLAMKGVAMTVWPCPPGEPCITDVCAAVAQLREAACDGVVAFGGGSVLDAAKAVALLVTNPDQTLSAMTEHSTLRPRLPLIAVPTTAGTGSETTNVTVIIDAVSGRKQVLAHASLMPDVAILDAAVTEGVPPNVTAMTGIDALTHAIEAYSALNATPFTDSLAIGAIAMIGKSLPKAVGYGHDLAARENMLLASCMAGMAFSSAGLGLCHAMAHQPGAALHIPHGQANAMLLPTVMGFNRMVCRERFSQIGRALTNKKSDDRDAIAAVCELIAEVGQSKRLADAGAKPEHYSAWAQAALEDICLRSNPRTATQAQIIDLYAAAG.

NAD(+) is bound by residues Asp-57, 116-120 (GSVLD), 156-160 (TTAGT), Lys-178, and 197-201 (VTEGV). Residues Asp-212, His-216, His-281, and His-295 each contribute to the Fe cation site. Residues His-295 and Asp-354 each contribute to the NAD(+) site.

Belongs to the iron-containing alcohol dehydrogenase family. The cofactor is Fe cation.

It localises to the bacterial microcompartment. The catalysed reaction is ethanol + NAD(+) = acetaldehyde + NADH + H(+). It functions in the pathway amine and polyamine degradation; ethanolamine degradation. Functionally, probably acts on the acetaldehyde produced by the degradation of ethanolamine, producing ethanol. In terms of biological role, expression of the eut operon allows this bacteria to use ethanolamine (EA) as a carbon, nitrogen and energy source. It relies on cobalamin (vitamin B12) both as a cofactor for the ethanolamine ammonia-lyase (EAL) activity and to induce the operon. EA enhances bacterial survival in macrophages in a concentration-dependent manner, suggesting it is an important nutrient during infection. In Salmonella typhimurium (strain LT2 / SGSC1412 / ATCC 700720), this protein is Probable alcohol dehydrogenase EutG.